The primary structure comprises 361 residues: S-adenosylmethionine:tRNA ribosyltransferase-isomerase (361 aa).

This sequence belongs to the QueA family. In terms of assembly, monomer.

The protein resides in the cytoplasm. It carries out the reaction 7-aminomethyl-7-carbaguanosine(34) in tRNA + S-adenosyl-L-methionine = epoxyqueuosine(34) in tRNA + adenine + L-methionine + 2 H(+). The protein operates within tRNA modification; tRNA-queuosine biosynthesis. Transfers and isomerizes the ribose moiety from AdoMet to the 7-aminomethyl group of 7-deazaguanine (preQ1-tRNA) to give epoxyqueuosine (oQ-tRNA). This Afipia carboxidovorans (strain ATCC 49405 / DSM 1227 / KCTC 32145 / OM5) (Oligotropha carboxidovorans) protein is S-adenosylmethionine:tRNA ribosyltransferase-isomerase.